The sequence spans 724 residues: Acyl-coenzyme A oxidase 2 (724 aa).

Residues 1–23 (MALISNLKDEYDHPTKTDPDTNP) are disordered. Residues 7 to 21 (LKDEYDHPTKTDPDT) are compositionally biased toward basic and acidic residues.

It belongs to the acyl-CoA oxidase family. FAD is required as a cofactor.

Its subcellular location is the peroxisome. It carries out the reaction a 2,3-saturated acyl-CoA + O2 = a (2E)-enoyl-CoA + H2O2. Its pathway is lipid metabolism; peroxisomal fatty acid beta-oxidation. In Candida maltosa (Yeast), this protein is Acyl-coenzyme A oxidase 2 (POX2).